A 188-amino-acid polypeptide reads, in one-letter code: Elongation factor P (188 aa).

The protein belongs to the elongation factor P family.

It is found in the cytoplasm. Its pathway is protein biosynthesis; polypeptide chain elongation. Its function is as follows. Involved in peptide bond synthesis. Stimulates efficient translation and peptide-bond synthesis on native or reconstituted 70S ribosomes in vitro. Probably functions indirectly by altering the affinity of the ribosome for aminoacyl-tRNA, thus increasing their reactivity as acceptors for peptidyl transferase. This chain is Elongation factor P, found in Nitrosospira multiformis (strain ATCC 25196 / NCIMB 11849 / C 71).